The chain runs to 122 residues: Large ribosomal subunit protein uL14 (122 aa).

It belongs to the universal ribosomal protein uL14 family. As to quaternary structure, part of the 50S ribosomal subunit. Forms a cluster with proteins L3 and L19. In the 70S ribosome, L14 and L19 interact and together make contacts with the 16S rRNA in bridges B5 and B8.

Its function is as follows. Binds to 23S rRNA. Forms part of two intersubunit bridges in the 70S ribosome. In Lachnospira eligens (strain ATCC 27750 / DSM 3376 / VPI C15-48 / C15-B4) (Eubacterium eligens), this protein is Large ribosomal subunit protein uL14.